A 162-amino-acid polypeptide reads, in one-letter code: Phosphopantetheine adenylyltransferase (162 aa).

Residue serine 11 participates in substrate binding. Residues 11-12 (SF) and histidine 19 each bind ATP. The substrate site is built by lysine 43, valine 76, and arginine 90. ATP contacts are provided by residues 91-93 (GLR), glutamate 101, and 126-132 (HLYISSS).

Belongs to the bacterial CoaD family. Homohexamer. The cofactor is Mg(2+).

It localises to the cytoplasm. It catalyses the reaction (R)-4'-phosphopantetheine + ATP + H(+) = 3'-dephospho-CoA + diphosphate. It functions in the pathway cofactor biosynthesis; coenzyme A biosynthesis; CoA from (R)-pantothenate: step 4/5. Functionally, reversibly transfers an adenylyl group from ATP to 4'-phosphopantetheine, yielding dephospho-CoA (dPCoA) and pyrophosphate. The chain is Phosphopantetheine adenylyltransferase from Streptococcus pneumoniae (strain 70585).